A 95-amino-acid chain; its full sequence is Large ribosomal subunit protein bL25 (95 aa).

It belongs to the bacterial ribosomal protein bL25 family. Part of the 50S ribosomal subunit; part of the 5S rRNA/L5/L18/L25 subcomplex. Contacts the 5S rRNA. Binds to the 5S rRNA independently of L5 and L18.

Functionally, this is one of the proteins that binds to the 5S RNA in the ribosome where it forms part of the central protuberance. This is Large ribosomal subunit protein bL25 from Shewanella putrefaciens (strain CN-32 / ATCC BAA-453).